Here is a 364-residue protein sequence, read N- to C-terminus: MREETREQPAPLRSGLTTGSCATATSLAAAKLLLTGQRNDAVDITLPKGKVVQMRLEFCRLIGECAEAGTLKDAGDDPDVTHGALVYSQVRLLVEPGIGFVAGSGVGTVTRPGLVLAVGEPAINPVPRRMISEHLQHLADACGYLGGFEVTVNVQGGEQLALKTMNPRLGILGGLSILGTSGIVRPFSCAAYIASIHQGIDVAHTNGYTHIAACTGNASEDTMRRVYGLPEIALIEMGDFVGAVLKHLRKVPVPRLTLCGGFGKISKLAAGHMDLHSRHSSIDLPQLAGWAADIGADEALQAAISGANTSQQALALAHAAGIALGDAVCAHALAFARSVVPAQVHVEVFAIDRQGGIVGQAGVQ.

This sequence belongs to the CbiD family.

The enzyme catalyses Co-precorrin-5B + S-adenosyl-L-methionine = Co-precorrin-6A + S-adenosyl-L-homocysteine. Its pathway is cofactor biosynthesis; adenosylcobalamin biosynthesis; cob(II)yrinate a,c-diamide from sirohydrochlorin (anaerobic route): step 6/10. Catalyzes the methylation of C-1 in cobalt-precorrin-5B to form cobalt-precorrin-6A. The sequence is that of Cobalt-precorrin-5B C(1)-methyltransferase from Pseudomonas putida (strain ATCC 47054 / DSM 6125 / CFBP 8728 / NCIMB 11950 / KT2440).